A 314-amino-acid polypeptide reads, in one-letter code: Acetyl-coenzyme A carboxylase carboxyl transferase subunit alpha (314 aa).

In terms of domain architecture, CoA carboxyltransferase C-terminal spans 32–289; sequence EIDMLEASLA…KRTFESHLSE (258 aa).

The protein belongs to the AccA family. As to quaternary structure, acetyl-CoA carboxylase is a heterohexamer composed of biotin carboxyl carrier protein (AccB), biotin carboxylase (AccC) and two subunits each of ACCase subunit alpha (AccA) and ACCase subunit beta (AccD).

The protein localises to the cytoplasm. The catalysed reaction is N(6)-carboxybiotinyl-L-lysyl-[protein] + acetyl-CoA = N(6)-biotinyl-L-lysyl-[protein] + malonyl-CoA. It functions in the pathway lipid metabolism; malonyl-CoA biosynthesis; malonyl-CoA from acetyl-CoA: step 1/1. Component of the acetyl coenzyme A carboxylase (ACC) complex. First, biotin carboxylase catalyzes the carboxylation of biotin on its carrier protein (BCCP) and then the CO(2) group is transferred by the carboxyltransferase to acetyl-CoA to form malonyl-CoA. The protein is Acetyl-coenzyme A carboxylase carboxyl transferase subunit alpha of Staphylococcus saprophyticus subsp. saprophyticus (strain ATCC 15305 / DSM 20229 / NCIMB 8711 / NCTC 7292 / S-41).